The following is a 426-amino-acid chain: Ubiquitin carboxyl-terminal hydrolase 46 (426 aa).

Residue Gly-2 is the site of N-myristoyl glycine attachment. Positions 27–406 (YGLVNFGNTC…SAYILFYQAR (380 aa)) constitute a USP domain. Cys-36 serves as the catalytic Nucleophile. The segment at 162-181 (TAGLPRSDEKGTSERNGGIT) is disordered. Catalysis depends on His-342, which acts as the Proton acceptor.

This sequence belongs to the peptidase C19 family. Interacts with wdr-20 and wdr-48; the catalytic activity of usp-46 is increased in the presence of both wdr-20 and wdr-48. Interacts with glr-1; the interaction results in deubiquitination of glr-1. As to expression, expressed in a number of tissues including the nervous system, pharynx, body wall muscle, vulva muscle and intestine and is detected in many head and ventral cord neurons.

It localises to the perikaryon. It is found in the cytoplasm. It catalyses the reaction Thiol-dependent hydrolysis of ester, thioester, amide, peptide and isopeptide bonds formed by the C-terminal Gly of ubiquitin (a 76-residue protein attached to proteins as an intracellular targeting signal).. Regulates the abundance of the glr-1 glutamate receptor in the ventral nerve cord by promoting its deubiquitination and preventing its degradation in the lysosome. Contributes to the regulation of embryonic polarity. The sequence is that of Ubiquitin carboxyl-terminal hydrolase 46 (usp-46) from Caenorhabditis elegans.